A 351-amino-acid polypeptide reads, in one-letter code: Photosystem II D2 protein (351 aa).

Residues 39–59 form a helical membrane-spanning segment; sequence CAFLALGGWLTGTTFVTSWYT. Position 116 (His-116) interacts with chlorophyll a. Residues 123–139 form a helical membrane-spanning segment; it reads GFMLRQFEIARLVGIRP. Pheophytin a contacts are provided by Gln-128 and Asn-141. Residues 151-164 form a helical membrane-spanning segment; the sequence is VFVSVFLMYPLGQS. Position 196 (His-196) interacts with chlorophyll a. Residues 206–226 traverse the membrane as a helical segment; sequence GALLCAIHGATVENTLFEDGD. A plastoquinone contacts are provided by His-213 and Phe-260. A Fe cation-binding site is contributed by His-213. His-267 contributes to the Fe cation binding site. A helical transmembrane segment spans residues 277–293; the sequence is GLWMSAVGIVGLALNLR.

The protein belongs to the reaction center PufL/M/PsbA/D family. As to quaternary structure, PSII is composed of 1 copy each of membrane proteins PsbA, PsbB, PsbC, PsbD, PsbE, PsbF, PsbH, PsbI, PsbJ, PsbK, PsbL, PsbM, PsbT, PsbX, PsbY, PsbZ, Psb30/Ycf12, peripheral proteins PsbO, CyanoQ (PsbQ), PsbU, PsbV and a large number of cofactors. It forms dimeric complexes. The D1/D2 heterodimer binds P680, chlorophylls that are the primary electron donor of PSII, and subsequent electron acceptors. It shares a non-heme iron and each subunit binds pheophytin, quinone, additional chlorophylls, carotenoids and lipids. There is also a Cl(-1) ion associated with D1 and D2, which is required for oxygen evolution. The PSII complex binds additional chlorophylls, carotenoids and specific lipids. serves as cofactor.

The protein localises to the cellular thylakoid membrane. It catalyses the reaction 2 a plastoquinone + 4 hnu + 2 H2O = 2 a plastoquinol + O2. Photosystem II (PSII) is a light-driven water:plastoquinone oxidoreductase that uses light energy to abstract electrons from H(2)O, generating O(2) and a proton gradient subsequently used for ATP formation. It consists of a core antenna complex that captures photons, and an electron transfer chain that converts photonic excitation into a charge separation. The D1/D2 (PsbA/PsbD) reaction center heterodimer binds P680, the primary electron donor of PSII as well as several subsequent electron acceptors. D2 is needed for assembly of a stable PSII complex. In Nostoc punctiforme (strain ATCC 29133 / PCC 73102), this protein is Photosystem II D2 protein.